A 130-amino-acid polypeptide reads, in one-letter code: Small ribosomal subunit protein uS9 (130 aa).

This sequence belongs to the universal ribosomal protein uS9 family.

In Pseudomonas putida (strain ATCC 700007 / DSM 6899 / JCM 31910 / BCRC 17059 / LMG 24140 / F1), this protein is Small ribosomal subunit protein uS9.